Consider the following 80-residue polypeptide: Putative membrane protein insertion efficiency factor (80 aa).

Residues lysine 61 to glutamate 80 are disordered. The segment covering threonine 62–glutamate 80 has biased composition (basic and acidic residues).

The protein belongs to the UPF0161 family.

It is found in the cell membrane. In terms of biological role, could be involved in insertion of integral membrane proteins into the membrane. The protein is Putative membrane protein insertion efficiency factor of Streptococcus pneumoniae serotype 19F (strain G54).